We begin with the raw amino-acid sequence, 432 residues long: Adenylosuccinate synthetase (432 aa).

GTP-binding positions include 13–19 (GDEGKGK) and 41–43 (GHT). Asp14 functions as the Proton acceptor in the catalytic mechanism. Residues Asp14 and Gly41 each coordinate Mg(2+). Residues 14–17 (DEGK), 39–42 (NAGH), Thr130, Arg144, Gln225, Thr240, and Arg304 contribute to the IMP site. His42 serves as the catalytic Proton donor. 300 to 306 (ATTGRRR) is a substrate binding site. GTP-binding positions include Arg306, 332-334 (KLD), and 415-417 (STG).

This sequence belongs to the adenylosuccinate synthetase family. In terms of assembly, homodimer. Requires Mg(2+) as cofactor.

It is found in the cytoplasm. The catalysed reaction is IMP + L-aspartate + GTP = N(6)-(1,2-dicarboxyethyl)-AMP + GDP + phosphate + 2 H(+). The protein operates within purine metabolism; AMP biosynthesis via de novo pathway; AMP from IMP: step 1/2. In terms of biological role, plays an important role in the de novo pathway of purine nucleotide biosynthesis. Catalyzes the first committed step in the biosynthesis of AMP from IMP. In Salmonella paratyphi C (strain RKS4594), this protein is Adenylosuccinate synthetase.